The following is a 715-amino-acid chain: ATP-dependent DNA helicase Hel308 (715 aa).

Positions 1–29 (MKVGELNVSEKIKEILRERGIEELYPPQA) match the Q motif motif. ATP contacts are provided by residues Gln-28 and 46-53 (IPTASGKT). Residues 33–197 (TSGVLEGENL…WLNAKLIRSD (165 aa)) enclose the Helicase ATP-binding domain. The DEAH box motif lies at 145 to 148 (DEIH). The 197-residue stretch at 226 to 422 (WEELVYDAVK…ILRSQILALI (197 aa)) folds into the Helicase C-terminal domain.

The protein belongs to the helicase family. Hel308 subfamily. In terms of assembly, monomer.

The enzyme catalyses Couples ATP hydrolysis with the unwinding of duplex DNA by translocating in the 3'-5' direction.. It carries out the reaction ATP + H2O = ADP + phosphate + H(+). Functionally, DNA-dependent ATPase and 3'-5' DNA helicase that may be involved in repair of stalled replication forks. Its function is as follows. Rapidly unwinds double-stranded (ds)DNA with a 3'-overhang, has no strand reannealing capabilities. Binds single-stranded (ss)DNA, dsDNA with a 3'-overhang and ssRNA. This chain is ATP-dependent DNA helicase Hel308, found in Pyrococcus abyssi (strain GE5 / Orsay).